The chain runs to 250 residues: tRNA (guanine-N(1)-)-methyltransferase (250 aa).

S-adenosyl-L-methionine is bound by residues Gly116 and 136-141 (IGDYVL).

Belongs to the RNA methyltransferase TrmD family. Homodimer.

It localises to the cytoplasm. It carries out the reaction guanosine(37) in tRNA + S-adenosyl-L-methionine = N(1)-methylguanosine(37) in tRNA + S-adenosyl-L-homocysteine + H(+). Its function is as follows. Specifically methylates guanosine-37 in various tRNAs. The sequence is that of tRNA (guanine-N(1)-)-methyltransferase from Pseudomonas fluorescens (strain SBW25).